Here is a 161-residue protein sequence, read N- to C-terminus: PRS fimbrial major pilin protein (161 aa).

Belongs to the fimbrial protein family.

The protein resides in the secreted. It localises to the fimbrium. Its function is as follows. Fimbriae (also called pili), polar filaments radiating from the surface of the bacterium to a length of 0.5-1.5 micrometers and numbering 100-300 per cell, enable bacteria to colonize the epithelium of specific host organs. The chain is PRS fimbrial major pilin protein (prsA) from Escherichia coli.